Here is a 310-residue protein sequence, read N- to C-terminus: Isoflavone reductase homolog P3 (310 aa).

Residues 12 to 18 (GGTGYIG), arginine 37, and lysine 46 each bind NADP(+). Catalysis depends on lysine 134, which acts as the Proton acceptor. NADP(+) is bound at residue arginine 138.

This sequence belongs to the NmrA-type oxidoreductase family. Isoflavone reductase subfamily.

It localises to the cytoplasm. The sequence is that of Isoflavone reductase homolog P3 from Arabidopsis thaliana (Mouse-ear cress).